A 482-amino-acid chain; its full sequence is Guanine nucleotide exchange factor SRM1 (482 aa).

A compositionally biased stretch (polar residues) spans Met-1 to Asp-11. The tract at residues Met-1–Ser-22 is disordered. A Nuclear localization signal motif is present at residues Ala-15–Ala-26. RCC1 repeat units follow at residues Pro-45–Glu-101, Ser-103–Lys-152, Asn-183–Glu-238, Glu-239–Lys-291, Asp-292–Gln-347, Gly-349–Gln-411, and Asn-412–Val-466. The disordered stretch occupies residues Lys-128 to Phe-158. The segment covering Asp-131–Glu-145 has biased composition (acidic residues). 2 positions are modified to phosphoserine: Ser-135 and Ser-136.

As to quaternary structure, component of a multicomponent complex composed of six to seven proteins, which has a collective molecular mass greater than 150 kDa. Interacts with GSP1 and YRB2. Post-translationally, phosphorylated; possibly by KSP1.

Its subcellular location is the nucleus. Guanine nucleotide exchange factor that promotes the exchange of GSP1/GSP2-bound GDP by GTP and controls RNA metabolism and transport. Involved in yeast pheromone response pathway and in mRNA metabolism. Involved in nuclear pore complex (NPC) assembly and required for mRNA and ribosome nuclear export. Binds chromatin and is involved NPC-mediated transcriptional control. The chain is Guanine nucleotide exchange factor SRM1 (SRM1) from Saccharomyces cerevisiae (strain ATCC 204508 / S288c) (Baker's yeast).